The sequence spans 406 residues: Putative cfxQ-like protein R730 (406 aa).

A disordered region spans residues 1–37 (MKRSHDSITRSINSDNDSETNMNSDNNNNNKPNQRKK). Over residues 13–32 (NSDNDSETNMNSDNNNNNKP) the composition is skewed to low complexity. An ATP-binding site is contributed by 173 to 180 (GPPGVGKS).

It belongs to the CbxX/CfxQ family.

This Acanthamoeba polyphaga mimivirus (APMV) protein is Putative cfxQ-like protein R730.